The primary structure comprises 399 residues: Putative glutamate--cysteine ligase 2 (399 aa).

Residues 377–399 (PAVGSSHGRTDPSRNGGPSHAGA) form a disordered region.

Belongs to the glutamate--cysteine ligase type 2 family. YbdK subfamily.

The catalysed reaction is L-cysteine + L-glutamate + ATP = gamma-L-glutamyl-L-cysteine + ADP + phosphate + H(+). In terms of biological role, ATP-dependent carboxylate-amine ligase which exhibits weak glutamate--cysteine ligase activity. The chain is Putative glutamate--cysteine ligase 2 from Thermobifida fusca (strain YX).